We begin with the raw amino-acid sequence, 266 residues long: Thiazole synthase (266 aa).

Lysine 95 (schiff-base intermediate with DXP) is an active-site residue. 1-deoxy-D-xylulose 5-phosphate is bound by residues glycine 156, 182–183 (AG), and 204–205 (NT).

The protein belongs to the ThiG family. As to quaternary structure, homotetramer. Forms heterodimers with either ThiH or ThiS.

The protein resides in the cytoplasm. It catalyses the reaction [ThiS sulfur-carrier protein]-C-terminal-Gly-aminoethanethioate + 2-iminoacetate + 1-deoxy-D-xylulose 5-phosphate = [ThiS sulfur-carrier protein]-C-terminal Gly-Gly + 2-[(2R,5Z)-2-carboxy-4-methylthiazol-5(2H)-ylidene]ethyl phosphate + 2 H2O + H(+). The protein operates within cofactor biosynthesis; thiamine diphosphate biosynthesis. Its function is as follows. Catalyzes the rearrangement of 1-deoxy-D-xylulose 5-phosphate (DXP) to produce the thiazole phosphate moiety of thiamine. Sulfur is provided by the thiocarboxylate moiety of the carrier protein ThiS. In vitro, sulfur can be provided by H(2)S. The sequence is that of Thiazole synthase from Shewanella denitrificans (strain OS217 / ATCC BAA-1090 / DSM 15013).